Consider the following 106-residue polypeptide: Pyrimidine/purine nucleoside phosphorylase (106 aa).

Belongs to the nucleoside phosphorylase PpnP family.

The enzyme catalyses a purine D-ribonucleoside + phosphate = a purine nucleobase + alpha-D-ribose 1-phosphate. It catalyses the reaction adenosine + phosphate = alpha-D-ribose 1-phosphate + adenine. The catalysed reaction is cytidine + phosphate = cytosine + alpha-D-ribose 1-phosphate. It carries out the reaction guanosine + phosphate = alpha-D-ribose 1-phosphate + guanine. The enzyme catalyses inosine + phosphate = alpha-D-ribose 1-phosphate + hypoxanthine. It catalyses the reaction thymidine + phosphate = 2-deoxy-alpha-D-ribose 1-phosphate + thymine. The catalysed reaction is uridine + phosphate = alpha-D-ribose 1-phosphate + uracil. It carries out the reaction xanthosine + phosphate = alpha-D-ribose 1-phosphate + xanthine. Catalyzes the phosphorolysis of diverse nucleosides, yielding D-ribose 1-phosphate and the respective free bases. Can use uridine, adenosine, guanosine, cytidine, thymidine, inosine and xanthosine as substrates. Also catalyzes the reverse reactions. The chain is Pyrimidine/purine nucleoside phosphorylase from Burkholderia cenocepacia (strain ATCC BAA-245 / DSM 16553 / LMG 16656 / NCTC 13227 / J2315 / CF5610) (Burkholderia cepacia (strain J2315)).